Here is a 423-residue protein sequence, read N- to C-terminus: Imidazolonepropionase (423 aa).

Residues His-87 and His-89 each contribute to the Fe(3+) site. Zn(2+)-binding residues include His-87 and His-89. Residues Arg-96, Tyr-159, and His-192 each coordinate 4-imidazolone-5-propanoate. Residue Tyr-159 coordinates N-formimidoyl-L-glutamate. His-257 lines the Fe(3+) pocket. Position 257 (His-257) interacts with Zn(2+). Glu-260 contacts 4-imidazolone-5-propanoate. Position 331 (Asp-331) interacts with Fe(3+). Asp-331 contributes to the Zn(2+) binding site. Residues Asn-333 and Gly-335 each coordinate N-formimidoyl-L-glutamate. Ser-336 provides a ligand contact to 4-imidazolone-5-propanoate.

The protein belongs to the metallo-dependent hydrolases superfamily. HutI family. The cofactor is Zn(2+). Requires Fe(3+) as cofactor.

It is found in the cytoplasm. The enzyme catalyses 4-imidazolone-5-propanoate + H2O = N-formimidoyl-L-glutamate. It functions in the pathway amino-acid degradation; L-histidine degradation into L-glutamate; N-formimidoyl-L-glutamate from L-histidine: step 3/3. In terms of biological role, catalyzes the hydrolytic cleavage of the carbon-nitrogen bond in imidazolone-5-propanoate to yield N-formimidoyl-L-glutamate. It is the third step in the universal histidine degradation pathway. In Porphyromonas gingivalis (strain ATCC 33277 / DSM 20709 / CIP 103683 / JCM 12257 / NCTC 11834 / 2561), this protein is Imidazolonepropionase.